The chain runs to 224 residues: Large ribosomal subunit protein uL1c (224 aa).

It belongs to the universal ribosomal protein uL1 family. Part of the 50S ribosomal subunit.

The protein resides in the plastid. It localises to the chloroplast. Its function is as follows. Binds directly to 23S rRNA. Might be involved in E site tRNA release (Potential). This chain is Large ribosomal subunit protein uL1c (rpl1), found in Cyanidioschyzon merolae (strain NIES-3377 / 10D) (Unicellular red alga).